A 232-amino-acid chain; its full sequence is MAEDVKPTRKNLMAIDDRIQLSERGHDTLEQKRDGLIMEFMDILDQAQDVRSDLNANYETAQQKLNMARAMEGDVAVRGAAAALKEHPEITTRSKNIMGVVVPQIESSRVKKSLDQRGYGLLGSSARIDEAADAYEELIETIILAAEVETAMKKMLKEIETTKRRVNALEFKLLPDLYENKEYIEQKLEEQEREEIFRLKKIKNKKEAEEEDEDEDESEMTDETVVQTPADD.

The segment at 200-232 (KKIKNKKEAEEEDEDEDESEMTDETVVQTPADD) is disordered. The segment covering 209–222 (EEEDEDEDESEMTD) has biased composition (acidic residues).

The protein belongs to the V-ATPase D subunit family. In terms of assembly, has multiple subunits with at least A(3), B(3), C, D, E, F, H, I and proteolipid K(x).

The protein localises to the cell membrane. Its function is as follows. Component of the A-type ATP synthase that produces ATP from ADP in the presence of a proton gradient across the membrane. The polypeptide is A-type ATP synthase subunit D (Haloquadratum walsbyi (strain DSM 16790 / HBSQ001)).